The chain runs to 267 residues: MAEYNWDERHIITFPEENSALTTKDLHVYYGEKEAIKGIDMQFEKNKITALIGPSGCGKSTYLRSLNRMNDTIDIARVTGQIMYEGIDVNAQDINVYEMRKHIGMVFQRPNPFAKSIYKNITFAYERAGVKDKKFLDEVVETSLKQAALWDQVKDDLHKSAFTLSGGQQQRLCIARAIAVKPEILLMDEPASALDPIATMQLEETMFELKKNYTIIIVTHNMQQAARASDYTAFFYLGDLIEYDKTNNIFQNAKCQSTSDYVSGRFG.

In terms of domain architecture, ABC transporter spans 21-262 (LTTKDLHVYY…AKCQSTSDYV (242 aa)). 53 to 60 (GPSGCGKS) is an ATP binding site.

This sequence belongs to the ABC transporter superfamily. Phosphate importer (TC 3.A.1.7) family. The complex is composed of two ATP-binding proteins (PstB), two transmembrane proteins (PstC and PstA) and a solute-binding protein (PstS).

It localises to the cell membrane. It carries out the reaction phosphate(out) + ATP + H2O = ADP + 2 phosphate(in) + H(+). Functionally, part of the ABC transporter complex PstSACB involved in phosphate import. Responsible for energy coupling to the transport system. The chain is Phosphate import ATP-binding protein PstB 2 from Streptococcus agalactiae serotype Ia (strain ATCC 27591 / A909 / CDC SS700).